The chain runs to 582 residues: ATP-dependent lipid A-core flippase (582 aa).

5 consecutive transmembrane segments (helical) span residues 16-36 (LWPT…ALIL), 64-84 (LLWM…TSYI), 153-173 (IIGL…ILVV), 253-273 (PIIQ…ASFP), and 275-295 (VMDS…IALM). The 283-residue stretch at 28–310 (IVAGIALILN…LTNVNAQFQR (283 aa)) folds into the ABC transmembrane type-1 domain. Residues 342-578 (LEFRNVTFTY…HGVYAQLHKM (237 aa)) form the ABC transporter domain. 376–383 (GRSGSGKS) contributes to the ATP binding site.

This sequence belongs to the ABC transporter superfamily. Lipid exporter (TC 3.A.1.106) family. In terms of assembly, homodimer.

It localises to the cell inner membrane. The enzyme catalyses ATP + H2O + lipid A-core oligosaccharideSide 1 = ADP + phosphate + lipid A-core oligosaccharideSide 2.. Its function is as follows. Involved in lipopolysaccharide (LPS) biosynthesis. Translocates lipid A-core from the inner to the outer leaflet of the inner membrane. Transmembrane domains (TMD) form a pore in the inner membrane and the ATP-binding domain (NBD) is responsible for energy generation. This Salmonella paratyphi A (strain ATCC 9150 / SARB42) protein is ATP-dependent lipid A-core flippase.